A 125-amino-acid chain; its full sequence is Glutaredoxin-C1 (125 aa).

The Glutaredoxin domain occupies 19–119 (VNKAKEIVSA…PLLTEAGAIA (101 aa)). A disulfide bond links Cys-39 and Cys-42.

Belongs to the glutaredoxin family. CPYC subfamily.

It localises to the cytoplasm. Has a glutathione-disulfide oxidoreductase activity in the presence of NADPH and glutathione reductase. Reduces low molecular weight disulfides and proteins. In Arabidopsis thaliana (Mouse-ear cress), this protein is Glutaredoxin-C1 (GRXC1).